The chain runs to 124 residues: Glutaredoxin-2 (124 aa).

A disulfide bridge connects residues cysteine 13 and cysteine 16.

Belongs to the glutaredoxin family. Homodimer.

It localises to the host cytoplasm. Its function is as follows. Glutaredoxin necessary for virion morphogenesis and virus replication. Functions as a thiol-disulfide transfer protein between membrane-associated OPG128 and substrates OPG095 or OPG053. The complete pathway for formation of disulfide bonds in intracellular virion membrane proteins sequentially involves oxidation of OPG072, OPG128 and OPG088. Exhibit thioltransferase and dehydroascorbate reductase activities in vitro. This Bos taurus (Bovine) protein is Glutaredoxin-2 (OPG088).